A 179-amino-acid polypeptide reads, in one-letter code: Phospholipase A2 (179 aa).

The signal sequence occupies residues 1 to 21 (MHALRSSVLALWLCLHVSVRA). A propeptide spanning residues 22–39 (WMTYRSANGLDEYEPEDR) is cleaved from the precursor. Ca(2+) contacts are provided by Trp-47, Gly-49, and Gly-51. 5 cysteine pairs are disulfide-bonded: Cys-48-Cys-70, Cys-69-Cys-109, Cys-76-Cys-102, Cys-100-Cys-133, and Cys-142-Cys-150. His-73 is an active-site residue. Ca(2+) is bound at residue Asp-74. Asp-103 is an active-site residue.

The protein belongs to the phospholipase A2 family. Group III subfamily. It depends on Ca(2+) as a cofactor. Expressed by the venom gland.

The protein resides in the secreted. The enzyme catalyses a 1,2-diacyl-sn-glycero-3-phosphocholine + H2O = a 1-acyl-sn-glycero-3-phosphocholine + a fatty acid + H(+). Functionally, may potentiate Xylotoxin(1)-Xa1a DRG activation and cell lysis, since the orthologous A.mellifera PA2 potentiates Xylotoxin(1)-Xa1a DRG activation and cell lysis. In vivo, intraplantar injection in mice may potentiate spontaneous pain behaviors and paw swelling caused by Xylotoxin(1)-Xa1a, since the orthologous A.mellifera PA2 shows this effect. PLA2 catalyzes the calcium-dependent hydrolysis of the 2-acyl groups in 3-sn-phosphoglycerides. This Xylocopa aruana (Great carpenter bee) protein is Phospholipase A2.